The sequence spans 518 residues: Probable lysine--tRNA ligase, cytoplasmic (518 aa).

The protein belongs to the class-II aminoacyl-tRNA synthetase family. Homodimer.

It is found in the cytoplasm. The enzyme catalyses tRNA(Lys) + L-lysine + ATP = L-lysyl-tRNA(Lys) + AMP + diphosphate. The chain is Probable lysine--tRNA ligase, cytoplasmic from Enterocytozoon bieneusi (strain H348) (Microsporidian parasite).